The following is a 428-amino-acid chain: Histidinol dehydrogenase (428 aa).

Tyr127, Gln185, and Asn208 together coordinate NAD(+). Substrate-binding residues include Ser234, Gln256, and His259. 2 residues coordinate Zn(2+): Gln256 and His259. Catalysis depends on proton acceptor residues Glu323 and His324. The substrate site is built by His324, Asp357, Glu411, and His416. Asp357 is a Zn(2+) binding site. His416 is a binding site for Zn(2+).

This sequence belongs to the histidinol dehydrogenase family. Zn(2+) serves as cofactor.

The enzyme catalyses L-histidinol + 2 NAD(+) + H2O = L-histidine + 2 NADH + 3 H(+). It functions in the pathway amino-acid biosynthesis; L-histidine biosynthesis; L-histidine from 5-phospho-alpha-D-ribose 1-diphosphate: step 9/9. Its function is as follows. Catalyzes the sequential NAD-dependent oxidations of L-histidinol to L-histidinaldehyde and then to L-histidine. The sequence is that of Histidinol dehydrogenase from Mannheimia succiniciproducens (strain KCTC 0769BP / MBEL55E).